The chain runs to 278 residues: Putative B3 domain-containing protein At2g21920 (278 aa).

The TF-B3 DNA-binding region spans 168–275; it reads ISKTLSRTDV…KFIILNFEYN (108 aa).

Its subcellular location is the nucleus. This is Putative B3 domain-containing protein At2g21920 from Arabidopsis thaliana (Mouse-ear cress).